The chain runs to 317 residues: tRNA(Ile)-lysidine synthase (317 aa).

Ser-32–Ser-37 contacts ATP.

It belongs to the tRNA(Ile)-lysidine synthase family.

Its subcellular location is the cytoplasm. It catalyses the reaction cytidine(34) in tRNA(Ile2) + L-lysine + ATP = lysidine(34) in tRNA(Ile2) + AMP + diphosphate + H(+). Functionally, ligates lysine onto the cytidine present at position 34 of the AUA codon-specific tRNA(Ile) that contains the anticodon CAU, in an ATP-dependent manner. Cytidine is converted to lysidine, thus changing the amino acid specificity of the tRNA from methionine to isoleucine. This is tRNA(Ile)-lysidine synthase from Aquifex aeolicus (strain VF5).